Here is a 726-residue protein sequence, read N- to C-terminus: Catalase-peroxidase (726 aa).

Residues 90 to 213 (WHAAGTYRIG…LAAVQMGLIY (124 aa)) constitute a cross-link (tryptophyl-tyrosyl-methioninium (Trp-Tyr) (with M-239)). H91 serves as the catalytic Proton acceptor. Positions 213–239 (YVNPEGPNGKPDPAAAARDIRETFARM) form a cross-link, tryptophyl-tyrosyl-methioninium (Tyr-Met) (with W-90). H254 provides a ligand contact to heme b. Positions 338–359 (TPKGGAGAGTVPDAHDPSKRHA) are disordered.

It belongs to the peroxidase family. Peroxidase/catalase subfamily. Homodimer or homotetramer. Requires heme b as cofactor. Post-translationally, formation of the three residue Trp-Tyr-Met cross-link is important for the catalase, but not the peroxidase activity of the enzyme.

It catalyses the reaction H2O2 + AH2 = A + 2 H2O. The catalysed reaction is 2 H2O2 = O2 + 2 H2O. Functionally, bifunctional enzyme with both catalase and broad-spectrum peroxidase activity. This is Catalase-peroxidase from Bradyrhizobium sp. (strain ORS 278).